The following is a 520-amino-acid chain: Ribonuclease Y (520 aa).

The chain crosses the membrane as a helical span at residues 3 to 23 (IEIAIVLILAAAGLGYFVGNM). The KH domain maps to 210–273 (SVSVVALPSD…EVAKIALEKL (64 aa)). Positions 336 to 429 (VYQHSLEVAF…VQAADALSGA (94 aa)) constitute an HD domain.

The protein belongs to the RNase Y family.

The protein resides in the cell membrane. Functionally, endoribonuclease that initiates mRNA decay. The polypeptide is Ribonuclease Y (Geobacter metallireducens (strain ATCC 53774 / DSM 7210 / GS-15)).